Consider the following 500-residue polypeptide: Na(+)/H(+) antiporter NhaB (500 aa).

The next 12 helical transmembrane spans lie at 28-50, 58-78, 96-116, 129-149, 150-170, 205-225, 241-261, 311-331, 350-370, 394-414, 449-469, and 477-497; these read FLML…LLVI, MALK…ALLL, VILL…LLLF, ALLA…LDAL, TVTA…HRVA, LLMH…VGEP, FFLK…VTCL, ILIA…LMVI, FKDA…VAVI, MLFI…VATI, VATP…IAPL, and MVWM…YAVS.

Belongs to the NhaB Na(+)/H(+) (TC 2.A.34) antiporter family.

The protein localises to the cell inner membrane. The catalysed reaction is 2 Na(+)(in) + 3 H(+)(out) = 2 Na(+)(out) + 3 H(+)(in). In terms of biological role, na(+)/H(+) antiporter that extrudes sodium in exchange for external protons. The sequence is that of Na(+)/H(+) antiporter NhaB from Pseudomonas fluorescens (strain Pf0-1).